We begin with the raw amino-acid sequence, 34 residues long: MEVNILGLTATALFIIIPTSFLLILYVKTASNEA.

The chain crosses the membrane as a helical span at residues 5 to 25 (ILGLTATALFIIIPTSFLLIL).

This sequence belongs to the PsbM family. PSII is composed of 1 copy each of membrane proteins PsbA, PsbB, PsbC, PsbD, PsbE, PsbF, PsbH, PsbI, PsbJ, PsbK, PsbL, PsbM, PsbT, PsbX, PsbY, PsbZ, Psb30/Ycf12, at least 3 peripheral proteins of the oxygen-evolving complex and a large number of cofactors. It forms dimeric complexes.

It is found in the plastid. Its subcellular location is the chloroplast thylakoid membrane. Functionally, one of the components of the core complex of photosystem II (PSII). PSII is a light-driven water:plastoquinone oxidoreductase that uses light energy to abstract electrons from H(2)O, generating O(2) and a proton gradient subsequently used for ATP formation. It consists of a core antenna complex that captures photons, and an electron transfer chain that converts photonic excitation into a charge separation. This subunit is found at the monomer-monomer interface. In Stigeoclonium helveticum (Green alga), this protein is Photosystem II reaction center protein M.